The sequence spans 281 residues: Putrescine transport system permease protein PotI (281 aa).

Topologically, residues 1-13 are cytoplasmic; the sequence is MNNLPVVRSPWRI. The helical transmembrane segment at 14-33 threads the bilayer; the sequence is VILLLGFTFLYAPMLMLVIY. The Periplasmic segment spans residues 34–68; sequence SFNSSKLVTVWAGWSTRWYGELLRDDAMMSAVGLS. Residues 65–260 enclose the ABC transmembrane type-1 domain; it reads VGLSLTIAAC…GAVGIVGFIA (196 aa). The helical transmembrane segment at 69–88 threads the bilayer; the sequence is LTIAACAATAAAILGTIAAV. Residues 89–115 are Cytoplasmic-facing; the sequence is VLVRFGRFRGSNGFAFMITAPLVMPDV. The chain crosses the membrane as a helical span at residues 116–135; sequence ITGLSLLLLFVALAHAIGWP. Residues 136 to 140 lie on the Periplasmic side of the membrane; that stretch reads ADRGM. The chain crosses the membrane as a helical span at residues 141–160; the sequence is LTIWLAHVTFCTAYVAVVIS. Over 161 to 186 the chain is Cytoplasmic; that stretch reads SRLRELDRSIEEAAMDLGATPLKVFF. A helical transmembrane segment spans residues 187–206; that stretch reads VITLPMIMPAIISGWLLAFT. Topologically, residues 207–243 are periplasmic; the sequence is LSLDDLVIASFVSGPGATTLPMLVFSSVRMGVNPEIN. Residues 244–263 form a helical membrane-spanning segment; it reads ALATLILGAVGIVGFIAWYL. At 264–281 the chain is on the cytoplasmic side; sequence MARAEKQRIRDIQRARRG.

This sequence belongs to the binding-protein-dependent transport system permease family. CysTW subfamily. The complex is composed of two ATP-binding proteins (PotG), two transmembrane proteins (PotH and PotI) and a solute-binding protein (PotF).

The protein localises to the cell inner membrane. Part of the ABC transporter complex PotFGHI involved in putrescine uptake. Responsible for the translocation of the substrate across the membrane. This is Putrescine transport system permease protein PotI from Escherichia coli O6:H1 (strain CFT073 / ATCC 700928 / UPEC).